A 92-amino-acid polypeptide reads, in one-letter code: Integration host factor subunit beta (92 aa).

Belongs to the bacterial histone-like protein family. Heterodimer of an alpha and a beta chain.

Its function is as follows. This protein is one of the two subunits of integration host factor, a specific DNA-binding protein that functions in genetic recombination as well as in transcriptional and translational control. The protein is Integration host factor subunit beta of Vibrio cholerae serotype O1 (strain ATCC 39541 / Classical Ogawa 395 / O395).